A 444-amino-acid chain; its full sequence is Adenylosuccinate lyase (444 aa).

N(6)-(1,2-dicarboxyethyl)-AMP contacts are provided by residues 9-10 (RY), 73-75 (KHD), and 97-98 (TS). The Proton donor/acceptor role is filled by H145. Residue Q219 participates in N(6)-(1,2-dicarboxyethyl)-AMP binding. S269 acts as the Proton donor/acceptor in catalysis. N(6)-(1,2-dicarboxyethyl)-AMP contacts are provided by residues S270, 275–277 (KRN), N283, and 314–318 (SAERI).

The protein belongs to the lyase 1 family. Adenylosuccinate lyase subfamily. In terms of assembly, homotetramer. Residues from neighboring subunits contribute catalytic and substrate-binding residues to each active site.

It carries out the reaction N(6)-(1,2-dicarboxyethyl)-AMP = fumarate + AMP. The enzyme catalyses (2S)-2-[5-amino-1-(5-phospho-beta-D-ribosyl)imidazole-4-carboxamido]succinate = 5-amino-1-(5-phospho-beta-D-ribosyl)imidazole-4-carboxamide + fumarate. Its pathway is purine metabolism; AMP biosynthesis via de novo pathway; AMP from IMP: step 2/2. It participates in purine metabolism; IMP biosynthesis via de novo pathway; 5-amino-1-(5-phospho-D-ribosyl)imidazole-4-carboxamide from 5-amino-1-(5-phospho-D-ribosyl)imidazole-4-carboxylate: step 2/2. Functionally, catalyzes two reactions in de novo purine nucleotide biosynthesis. Catalyzes the breakdown of 5-aminoimidazole- (N-succinylocarboxamide) ribotide (SAICAR or 2-[5-amino-1-(5-phospho-beta-D-ribosyl)imidazole-4-carboxamido]succinate) to 5-aminoimidazole-4-carboxamide ribotide (AICAR or 5-amino-1-(5-phospho-beta-D-ribosyl)imidazole-4-carboxamide) and fumarate, and of adenylosuccinate (ADS or N(6)-(1,2-dicarboxyethyl)-AMP) to adenosine monophosphate (AMP) and fumarate. This chain is Adenylosuccinate lyase (purB), found in Archaeoglobus fulgidus (strain ATCC 49558 / DSM 4304 / JCM 9628 / NBRC 100126 / VC-16).